A 398-amino-acid chain; its full sequence is O-methyltransferase aoiO (398 aa).

Asp251 provides a ligand contact to S-adenosyl-L-methionine. The Proton acceptor role is filled by His299.

It belongs to the class I-like SAM-binding methyltransferase superfamily. Cation-independent O-methyltransferase family.

Functionally, O-methyltransferase; part of the gene cluster that mediates the biosynthesis of a methylated derivative of known natural products orthosporin and diaporthin. Seems not to be involved in the biosynthesis of the identified final product of the pathway and its function has still to be determined. This Aspergillus oryzae (strain ATCC 42149 / RIB 40) (Yellow koji mold) protein is O-methyltransferase aoiO.